We begin with the raw amino-acid sequence, 210 residues long: Sortase A (210 aa).

At 1-5 (MNKQR) the chain is on the cytoplasmic side. The chain crosses the membrane as a helical span at residues 6–26 (IYSIVAILLFVVGGVLIGKPF). Over 27 to 210 (YDGYQAEKKQ…GDLVGTKAKK (184 aa)) the chain is Extracellular. His126 (proton donor/acceptor) is an active-site residue. The Acyl-thioester intermediate role is filled by Cys187.

It belongs to the bacterial sortase family. Class A subfamily.

It localises to the cell membrane. With respect to regulation, inhibited by thiol-reactive reagents. Its function is as follows. Transpeptidase that anchors surface proteins to the cell wall. Recognizes and modifies its substrate by proteolytic cleavage of a C-terminal sorting signal. Following cleavage, a covalent intermediate is formed via a thioester bond between the sortase and its substrate, which is then transferred and covalently attached to the cell wall. This sortase recognizes a Leu-Pro-x-Thr-Gly (LPXTG) motif, which is cleaved by the sortase between the threonine and glycine residues. Important for growth in macrophages. May be critical in the early stages of inhalation anthrax. In Bacillus anthracis, this protein is Sortase A.